A 304-amino-acid chain; its full sequence is Ribonuclease Z (304 aa).

7 residues coordinate Zn(2+): H61, H63, D65, H66, H138, D206, and H265. Catalysis depends on D65, which acts as the Proton acceptor.

Belongs to the RNase Z family. Homodimer. The cofactor is Zn(2+).

The enzyme catalyses Endonucleolytic cleavage of RNA, removing extra 3' nucleotides from tRNA precursor, generating 3' termini of tRNAs. A 3'-hydroxy group is left at the tRNA terminus and a 5'-phosphoryl group is left at the trailer molecule.. Its function is as follows. Zinc phosphodiesterase, which displays some tRNA 3'-processing endonuclease activity. Probably involved in tRNA maturation, by removing a 3'-trailer from precursor tRNA. This is Ribonuclease Z from Lachnospira eligens (strain ATCC 27750 / DSM 3376 / VPI C15-48 / C15-B4) (Eubacterium eligens).